Here is a 156-residue protein sequence, read N- to C-terminus: Small ribosomal subunit protein uS7 (156 aa).

Belongs to the universal ribosomal protein uS7 family. Part of the 30S ribosomal subunit. Contacts proteins S9 and S11.

One of the primary rRNA binding proteins, it binds directly to 16S rRNA where it nucleates assembly of the head domain of the 30S subunit. Is located at the subunit interface close to the decoding center, probably blocks exit of the E-site tRNA. This chain is Small ribosomal subunit protein uS7, found in Solibacter usitatus (strain Ellin6076).